The chain runs to 196 residues: MPFVVIITGIPGVGKSTITKLALQRTRAKFKLINFGDLMFEEALKLKLVKHRDEMRKLPLEVQRELQMNAAKKIAEMAKNYPILLDTHATIKTPHGYLLGLPYEVIKILNPNFIVIIEATPSEILGRRLRDLKRDRDVETEEQIQRHQDLNRAAAITYAMHSNALIKIIENHEDKGLEEAVNELVKILDLAVKEYA.

9-17 (GIPGVGKST) contacts ATP.

Belongs to the archaeal adenylate kinase family.

The protein localises to the cytoplasm. It carries out the reaction AMP + ATP = 2 ADP. The sequence is that of Adenylate kinase (adkA) from Pyrococcus horikoshii (strain ATCC 700860 / DSM 12428 / JCM 9974 / NBRC 100139 / OT-3).